A 151-amino-acid polypeptide reads, in one-letter code: Histone H2B.1 (151 aa).

Basic and acidic residues-rich tracts occupy residues 1-28 and 36-51; these read MAPKAEKKPAAKKPAEEEPATEKVEKAP and EKRLPAGKSKEGGEGK. A disordered region spans residues 1–58; it reads MAPKAEKKPAAKKPAEEEPATEKVEKAPAGKKPKAEKRLPAGKSKEGGEGKKGKKKAK. Residues K7 and K37 each carry the N6-acetyllysine modification. K147 participates in a covalent cross-link: Glycyl lysine isopeptide (Lys-Gly) (interchain with G-Cter in ubiquitin).

It belongs to the histone H2B family. In terms of assembly, the nucleosome is a histone octamer containing two molecules each of H2A, H2B, H3 and H4 assembled in one H3-H4 heterotetramer and two H2A-H2B heterodimers. The octamer wraps approximately 147 bp of DNA. Post-translationally, can be acetylated to form H2BK6ac and H2BK33ac. Monoubiquitinated to form H2BK143ub1; may give a specific tag for epigenetic transcriptional activation.

It localises to the nucleus. The protein resides in the chromosome. Its function is as follows. Core component of nucleosome. Nucleosomes wrap and compact DNA into chromatin, limiting DNA accessibility to the cellular machineries which require DNA as a template. Histones thereby play a central role in transcription regulation, DNA repair, DNA replication and chromosomal stability. DNA accessibility is regulated via a complex set of post-translational modifications of histones, also called histone code, and nucleosome remodeling. The polypeptide is Histone H2B.1 (Zea mays (Maize)).